A 172-amino-acid polypeptide reads, in one-letter code: 3-hydroxydecanoyl-[acyl-carrier-protein] dehydratase (172 aa).

His71 is an active-site residue.

The protein belongs to the thioester dehydratase family. FabA subfamily. Homodimer.

The protein resides in the cytoplasm. The catalysed reaction is a (3R)-hydroxyacyl-[ACP] = a (2E)-enoyl-[ACP] + H2O. The enzyme catalyses (3R)-hydroxydecanoyl-[ACP] = (2E)-decenoyl-[ACP] + H2O. It catalyses the reaction (2E)-decenoyl-[ACP] = (3Z)-decenoyl-[ACP]. The protein operates within lipid metabolism; fatty acid biosynthesis. Functionally, necessary for the introduction of cis unsaturation into fatty acids. Catalyzes the dehydration of (3R)-3-hydroxydecanoyl-ACP to E-(2)-decenoyl-ACP and then its isomerization to Z-(3)-decenoyl-ACP. Can catalyze the dehydratase reaction for beta-hydroxyacyl-ACPs with saturated chain lengths up to 16:0, being most active on intermediate chain length. The protein is 3-hydroxydecanoyl-[acyl-carrier-protein] dehydratase of Vibrio cholerae serotype O1 (strain ATCC 39541 / Classical Ogawa 395 / O395).